Consider the following 629-residue polypeptide: uncharacterized protein (629 aa).

H562 functions as the Proton acceptor in the catalytic mechanism.

It belongs to the GMC oxidoreductase family. Requires FAD as cofactor.

This is an uncharacterized protein from Mycobacterium tuberculosis (strain CDC 1551 / Oshkosh).